Reading from the N-terminus, the 195-residue chain is Recombination protein RecR (195 aa).

A C4-type zinc finger spans residues C56–C71. The region spanning S79–P174 is the Toprim domain.

The protein belongs to the RecR family.

Functionally, may play a role in DNA repair. It seems to be involved in an RecBC-independent recombinational process of DNA repair. It may act with RecF and RecO. The protein is Recombination protein RecR of Psychrobacter sp. (strain PRwf-1).